We begin with the raw amino-acid sequence, 259 residues long: Trypsin (259 aa).

Positions 1–32 are cleaved as a signal peptide; that stretch reads MKHFLRALKRCSVAVATVAIAVVGLQPVTASA. The propeptide at 33-36 is activation peptide; that stretch reads APNP. Residues 37–257 form the Peptidase S1 domain; it reads VVGGTRAAQG…FASAIASAAR (221 aa). C58 and C74 are joined by a disulfide. Active-site charge relay system residues include H73 and D118. 2 disulfide bridges follow: C177-C192 and C204-C233. The active-site Charge relay system is S208.

This sequence belongs to the peptidase S1 family.

The catalysed reaction is Preferential cleavage: Arg-|-Xaa, Lys-|-Xaa.. This Streptomyces griseus protein is Trypsin (sprT).